We begin with the raw amino-acid sequence, 115 residues long: Disintegrin EC6 subunit alpha (115 aa).

The first 20 residues, 1–20, serve as a signal peptide directing secretion; the sequence is MIQVLLVIICLAVFPYQGSS. Residues 21–47 constitute a propeptide that is removed on maturation; the sequence is IILESGNINDYEIVYPKKVAVLPTGAM. Residues 48–112 enclose the Disintegrin domain; the sequence is NSVHPCCDPV…DCPRNRYKGK (65 aa). 4 disulfide bridges follow: C53/C76, C67/C73, C72/C97, and C85/C104. A Cell attachment site; atypical (MLD) motif is present at residues 89–91; it reads MLD.

Belongs to the disintegrin family. Dimeric disintegrin subfamily. Heterodimer with subunit beta; disulfide-linked. Expressed by the venom gland.

The protein localises to the secreted. In terms of biological role, potently inhibits adhesion of alpha-4/beta-1 (ITGA4/ITGB1) and alpha-9/beta-1 (ITGA9/ITGB1) integrins to VCAM1, and adhesion of alpha-5/beta-1 (ITGA5/ITGB1) integrin to fibronectin. Has a much less effect on alpha-IIb/beta-3 (ITGA2B/ITGB3) integrin. Also potently inhibits neutrophil migration across TNF-alpha-activated human umbilical endothelial cells. This is Disintegrin EC6 subunit alpha from Echis carinatus sochureki (Saw-scaled viper).